A 374-amino-acid polypeptide reads, in one-letter code: MAFHGHLPHEMTMQALGADDAAVAAAAAAGGVGAGGAPAWMRYNDGSFLHLQTTSDSSASPSGAAAAAAAAAAAAAAGVQQWMGGGGGGEDAVAAAMGGGGEADAARCKAEILAHPLYEQLLSAHVACLRIATPVDQLPRIDAQLAQSQGVVAKYSALAAAAAGDDGRELDQFMTHYVLLLCSFKEQLQQHVRVHAMEAVMACWELEQNLQSLTGASPGEGTGATMSDGEDDQADSEANMYDPSLDGADNMGFGLPTESERSLMERVRQELKHELKQGYKEKLIDIREEILRKRRAGKLPGDTTSTLKAWWQSHAKWPYPTEEDKARLVQETGLQLKQINNWFINQRKRNWHSNPSSSTSVKTKRKSNAGDNNS.

Positions 214–242 are disordered; the sequence is TGASPGEGTGATMSDGEDDQADSEANMYD. Positions 270-290 constitute an ELK domain; the sequence is ELKHELKQGYKEKLIDIREEI. Positions 291 to 354 form a DNA-binding region, homeobox; TALE-type; sequence LRKRRAGKLP…NQRKRNWHSN (64 aa). A disordered region spans residues 347-374; it reads RKRNWHSNPSSSTSVKTKRKSNAGDNNS.

The protein belongs to the TALE/KNOX homeobox family. In terms of tissue distribution, isoforms 1 and 2 are expressed in roots, stems, shoot meristem, leaf blades, leaf sheaths and flowers. Isoform 3 is expressed in stems, shoot meristem, rachis, leaf blades and leaf sheaths.

The protein localises to the nucleus. Isoform 3 acts as a transcription activator, but isoforms 1 and 2 do not. This chain is Homeobox protein knotted-1-like 13 (OSH45), found in Oryza sativa subsp. japonica (Rice).